We begin with the raw amino-acid sequence, 111 residues long: WAP four-disulfide core domain protein 12 (111 aa).

A signal peptide spans Met1 to Gly23. The WAP domain maps to Gly27–Val74. 4 disulfides stabilise this stretch: Cys34-Cys62, Cys41-Cys66, Cys49-Cys61, and Cys55-Cys70. The tract at residues Gly80 to Lys111 is disordered. The segment covering Pro101–Lys111 has biased composition (polar residues).

The protein localises to the secreted. Functionally, antibacterial protein. Putative acid-stable proteinase inhibitor. This chain is WAP four-disulfide core domain protein 12 (WFDC12), found in Chlorocebus aethiops (Green monkey).